The following is a 624-amino-acid chain: Kelch-like protein diablo (624 aa).

The interval 1-55 (MGDPLLPGSTGLGSGSATAATGGSVTAGSGLGNGGTGGAERPPSPARLTHTSEKH) is disordered. Low complexity predominate over residues 15–28 (GSATAATGGSVTAG). A compositionally biased stretch (gly residues) spans 29 to 38 (SGLGNGGTGG). Residues 73–140 (CDVVLNVGGR…CYTAHIIVEE (68 aa)) form the BTB domain. The BACK domain maps to 175-277 (CLGIRAFADT…SPKFLVGTVG (103 aa)). Kelch repeat units lie at residues 324–370 (VLFA…VLND), 372–418 (LYAV…VLDG), 419–465 (FLYA…VLSG), 467–512 (LYAI…VFNN), 514–559 (IYAV…VVNG), and 560–606 (QLYA…VMRA).

It participates in protein modification; protein ubiquitination. Probable substrate-specific adapter of an E3 ubiquitin-protein ligase complex which mediates the ubiquitination and subsequent proteasomal degradation of target proteins. May have a role in synapse differentiation and growth. The chain is Kelch-like protein diablo from Drosophila grimshawi (Hawaiian fruit fly).